Consider the following 487-residue polypeptide: GTPase Der (487 aa).

EngA-type G domains are found at residues proline 5–isoleucine 169 and isoleucine 178–glutamine 351. GTP contacts are provided by residues glycine 11 to serine 18, aspartate 58 to isoleucine 62, asparagine 121 to aspartate 124, glycine 184 to serine 191, aspartate 231 to isoleucine 235, and asparagine 296 to aspartate 299. The KH-like domain maps to lysine 352–aspartate 439. Residues proline 441–tyrosine 466 are disordered.

Belongs to the TRAFAC class TrmE-Era-EngA-EngB-Septin-like GTPase superfamily. EngA (Der) GTPase family. As to quaternary structure, associates with the 50S ribosomal subunit.

Functionally, GTPase that plays an essential role in the late steps of ribosome biogenesis. The chain is GTPase Der from Protochlamydia amoebophila (strain UWE25).